The chain runs to 243 residues: Putative outer membrane protein RP075 (243 aa).

The signal sequence occupies residues 1–23 (MLRIVKKLWVILFISNISINSFA).

The protein belongs to the OmpW/AlkL family.

It localises to the cell outer membrane. The protein is Putative outer membrane protein RP075 of Rickettsia prowazekii (strain Madrid E).